The chain runs to 146 residues: Hemoglobin subunit beta (146 aa).

In terms of domain architecture, Globin spans 2-146 (HWTAEEKQLI…VAHALARKYH (145 aa)). 2 residues coordinate heme b: His63 and His92.

The protein belongs to the globin family. In terms of assembly, heterotetramer of two alpha chains and two beta chains. Red blood cells.

Functionally, involved in oxygen transport from the lung to the various peripheral tissues. The chain is Hemoglobin subunit beta (HBB) from Ciconia ciconia (White stork).